Here is a 152-residue protein sequence, read N- to C-terminus: Large ribosomal subunit protein bL9 (152 aa).

This sequence belongs to the bacterial ribosomal protein bL9 family.

Its function is as follows. Binds to the 23S rRNA. This chain is Large ribosomal subunit protein bL9, found in Mycobacterium bovis (strain ATCC BAA-935 / AF2122/97).